The chain runs to 62 residues: Photosystem II reaction center protein Z (62 aa).

Helical transmembrane passes span 8 to 28 (AVFALIATSSILLISVPVVFA) and 41 to 61 (FSGTSLWIGLVFLVGILNSLI).

This sequence belongs to the PsbZ family. As to quaternary structure, PSII is composed of 1 copy each of membrane proteins PsbA, PsbB, PsbC, PsbD, PsbE, PsbF, PsbH, PsbI, PsbJ, PsbK, PsbL, PsbM, PsbT, PsbY, PsbZ, Psb30/Ycf12, at least 3 peripheral proteins of the oxygen-evolving complex and a large number of cofactors. It forms dimeric complexes.

The protein resides in the plastid. The protein localises to the chloroplast thylakoid membrane. May control the interaction of photosystem II (PSII) cores with the light-harvesting antenna, regulates electron flow through the 2 photosystem reaction centers. PSII is a light-driven water plastoquinone oxidoreductase, using light energy to abstract electrons from H(2)O, generating a proton gradient subsequently used for ATP formation. In Nymphaea alba (White water-lily), this protein is Photosystem II reaction center protein Z.